Consider the following 360-residue polypeptide: Phospho-N-acetylmuramoyl-pentapeptide-transferase (360 aa).

Transmembrane regions (helical) follow at residues 27–47 (GAVMTAMLVAFVFGPGIIEWL), 73–93 (TMGGIMILLGVGVATLLWADL), 98–118 (VWAVLLLTLGYGAIGFADDYL), 134–154 (LVAQVGMAVIAGLWIMLLGQG), 168–188 (LTFNLGWFYLPFAAFVMVGAS), 199–219 (GLAIVPVMIAAGVFMLIAYLV), 239–259 (LAVFCGAIVGAAVGFLWFNAP), 263–283 (VFMGDTGSLALGGALGAVSVV), 288–308 (IVLAIVGGLFVLETVSVIVQV), and 337–357 (TVVIRFWIIAMILAIVGLSTL).

This sequence belongs to the glycosyltransferase 4 family. MraY subfamily. Requires Mg(2+) as cofactor.

The protein resides in the cell inner membrane. It catalyses the reaction UDP-N-acetyl-alpha-D-muramoyl-L-alanyl-gamma-D-glutamyl-meso-2,6-diaminopimeloyl-D-alanyl-D-alanine + di-trans,octa-cis-undecaprenyl phosphate = di-trans,octa-cis-undecaprenyl diphospho-N-acetyl-alpha-D-muramoyl-L-alanyl-D-glutamyl-meso-2,6-diaminopimeloyl-D-alanyl-D-alanine + UMP. It functions in the pathway cell wall biogenesis; peptidoglycan biosynthesis. In terms of biological role, catalyzes the initial step of the lipid cycle reactions in the biosynthesis of the cell wall peptidoglycan: transfers peptidoglycan precursor phospho-MurNAc-pentapeptide from UDP-MurNAc-pentapeptide onto the lipid carrier undecaprenyl phosphate, yielding undecaprenyl-pyrophosphoryl-MurNAc-pentapeptide, known as lipid I. This chain is Phospho-N-acetylmuramoyl-pentapeptide-transferase, found in Rhodospirillum rubrum (strain ATCC 11170 / ATH 1.1.1 / DSM 467 / LMG 4362 / NCIMB 8255 / S1).